The primary structure comprises 130 residues: Small ribosomal subunit protein uS17m (130 aa).

Residues 1 to 20 (MSVVRSSVHARWIVGKVIGT) constitute a mitochondrion transit peptide.

It belongs to the universal ribosomal protein uS17 family. In terms of assembly, component of the mitochondrial small ribosomal subunit (mt-SSU). Mature mammalian 55S mitochondrial ribosomes consist of a small (28S) and a large (39S) subunit. The 28S small subunit contains a 12S ribosomal RNA (12S mt-rRNA) and 30 different proteins. The 39S large subunit contains a 16S rRNA (16S mt-rRNA), a copy of mitochondrial valine transfer RNA (mt-tRNA(Val)), which plays an integral structural role, and 52 different proteins.

It is found in the mitochondrion. The protein is Small ribosomal subunit protein uS17m (MRPS17) of Homo sapiens (Human).